We begin with the raw amino-acid sequence, 273 residues long: 2,3,4,5-tetrahydropyridine-2,6-dicarboxylate N-succinyltransferase (273 aa).

Residues Arg104 and Asp141 each contribute to the substrate site.

It belongs to the transferase hexapeptide repeat family. As to quaternary structure, homotrimer.

Its subcellular location is the cytoplasm. The enzyme catalyses (S)-2,3,4,5-tetrahydrodipicolinate + succinyl-CoA + H2O = (S)-2-succinylamino-6-oxoheptanedioate + CoA. It functions in the pathway amino-acid biosynthesis; L-lysine biosynthesis via DAP pathway; LL-2,6-diaminopimelate from (S)-tetrahydrodipicolinate (succinylase route): step 1/3. The protein is 2,3,4,5-tetrahydropyridine-2,6-dicarboxylate N-succinyltransferase of Azoarcus sp. (strain BH72).